A 244-amino-acid polypeptide reads, in one-letter code: Acetoacetate decarboxylase (244 aa).

Lys-115 (schiff-base intermediate with acetoacetate) is an active-site residue.

This sequence belongs to the ADC family. As to quaternary structure, homododecamer.

The enzyme catalyses acetoacetate + H(+) = acetone + CO2. Catalyzes the conversion of acetoacetate to acetone and carbon dioxide. The polypeptide is Acetoacetate decarboxylase (Clostridium acetobutylicum (strain ATCC 824 / DSM 792 / JCM 1419 / IAM 19013 / LMG 5710 / NBRC 13948 / NRRL B-527 / VKM B-1787 / 2291 / W)).